The sequence spans 260 residues: Adenosylcobinamide-GDP ribazoletransferase (260 aa).

The next 8 membrane-spanning stretches (helical) occupy residues 3–23, 36–56, 60–80, 108–128, 133–153, 180–200, 206–226, and 239–259; these read APLW…LPAW, FAPW…LVLI, WPTS…SGGL, VGAS…AALL, LAPL…LWAM, ALPA…LMIV, MVLM…PELL, and GASV…LLTA.

Belongs to the CobS family. The cofactor is Mg(2+).

The protein localises to the cell inner membrane. It catalyses the reaction alpha-ribazole + adenosylcob(III)inamide-GDP = adenosylcob(III)alamin + GMP + H(+). It carries out the reaction alpha-ribazole 5'-phosphate + adenosylcob(III)inamide-GDP = adenosylcob(III)alamin 5'-phosphate + GMP + H(+). Its pathway is cofactor biosynthesis; adenosylcobalamin biosynthesis; adenosylcobalamin from cob(II)yrinate a,c-diamide: step 7/7. Functionally, joins adenosylcobinamide-GDP and alpha-ribazole to generate adenosylcobalamin (Ado-cobalamin). Also synthesizes adenosylcobalamin 5'-phosphate from adenosylcobinamide-GDP and alpha-ribazole 5'-phosphate. This Prochlorococcus marinus (strain MIT 9303) protein is Adenosylcobinamide-GDP ribazoletransferase.